The following is a 338-amino-acid chain: MEMO1 family protein MHO1 (338 aa).

This sequence belongs to the MEMO1 family.

The protein localises to the cytoplasm. Its subcellular location is the nucleus. Functionally, plays a role in haploid invasive growth under conditions of nutrient insufficiency, suggesting that the function of the MEMO1 family in cell motility/invasion is conserved across species. The protein is MEMO1 family protein MHO1 of Saccharomyces cerevisiae (strain ATCC 204508 / S288c) (Baker's yeast).